Here is a 372-residue protein sequence, read N- to C-terminus: 4-hydroxy-3-methylbut-2-en-1-yl diphosphate synthase (flavodoxin) (372 aa).

[4Fe-4S] cluster is bound by residues Cys-270, Cys-273, Cys-305, and Glu-312.

This sequence belongs to the IspG family. It depends on [4Fe-4S] cluster as a cofactor.

It catalyses the reaction (2E)-4-hydroxy-3-methylbut-2-enyl diphosphate + oxidized [flavodoxin] + H2O + 2 H(+) = 2-C-methyl-D-erythritol 2,4-cyclic diphosphate + reduced [flavodoxin]. The protein operates within isoprenoid biosynthesis; isopentenyl diphosphate biosynthesis via DXP pathway; isopentenyl diphosphate from 1-deoxy-D-xylulose 5-phosphate: step 5/6. Converts 2C-methyl-D-erythritol 2,4-cyclodiphosphate (ME-2,4cPP) into 1-hydroxy-2-methyl-2-(E)-butenyl 4-diphosphate. This Citrobacter koseri (strain ATCC BAA-895 / CDC 4225-83 / SGSC4696) protein is 4-hydroxy-3-methylbut-2-en-1-yl diphosphate synthase (flavodoxin).